The chain runs to 328 residues: Malate dehydrogenase (328 aa).

Residue 12–18 (GAAGQIG) coordinates NAD(+). The substrate site is built by Arg93 and Arg99. NAD(+)-binding positions include Asn106, Gln113, and 130–132 (VGN). Residues Asn132 and Arg163 each coordinate substrate. The Proton acceptor role is filled by His188.

It belongs to the LDH/MDH superfamily. MDH type 2 family.

The catalysed reaction is (S)-malate + NAD(+) = oxaloacetate + NADH + H(+). Functionally, catalyzes the reversible oxidation of malate to oxaloacetate. This chain is Malate dehydrogenase, found in Saccharopolyspora erythraea (strain ATCC 11635 / DSM 40517 / JCM 4748 / NBRC 13426 / NCIMB 8594 / NRRL 2338).